A 1235-amino-acid chain; its full sequence is Phosphorylase b kinase regulatory subunit alpha, liver isoform (1235 aa).

The disordered stretch occupies residues 636 to 655 (FSPDSEPDLGGYLEDSSPQE). 3 positions are modified to phosphoserine: S695, S729, and S735. The tract at residues 807–837 (LSELYGKAGLNQEWSLIRYISGLLRKKVEVL) is calmodulin-binding. A phosphoserine mark is found at S983, S1015, and S1044. The segment at 1033 to 1060 (SIKSVRSSTPSSPTGTSSTDSGGQHLGW) is disordered. The segment covering 1039 to 1055 (SSTPSSPTGTSSTDSGG) has biased composition (low complexity). The segment at 1059–1099 (GWGEQQGQWLRRRRLDGAINRVPVGFYQKVWKILQKCHGLS) is calmodulin-binding. A lipid anchor (S-farnesyl cysteine) is attached at C1232.

This sequence belongs to the phosphorylase b kinase regulatory chain family. In terms of assembly, hexadecamer of 4 heterotetramers, each composed of alpha, beta, gamma, and delta subunits. Alpha (PHKA1 or PHKA2) and beta (PHKB) are regulatory subunits, gamma (PHKG1 or PHKG2) is the catalytic subunit, and delta is calmodulin. Although the final Cys may be farnesylated, the terminal tripeptide is probably not removed, and the C-terminus is not methylated.

The protein localises to the cell membrane. Its pathway is glycan biosynthesis; glycogen metabolism. By phosphorylation of various serine residues and by calcium. Functionally, phosphorylase b kinase catalyzes the phosphorylation of serine in certain substrates, including troponin I. The alpha chain may bind calmodulin. This is Phosphorylase b kinase regulatory subunit alpha, liver isoform (Phka2) from Mus musculus (Mouse).